Consider the following 315-residue polypeptide: Ornithine carbamoyltransferase (315 aa).

Residues 53-56 (STRT), Q80, R104, and 131-134 (HPCQ) each bind carbamoyl phosphate. L-ornithine contacts are provided by residues N163, D227, and 231–232 (SM). Carbamoyl phosphate-binding positions include 267 to 268 (CL) and R295.

Belongs to the aspartate/ornithine carbamoyltransferase superfamily. OTCase family.

It localises to the cytoplasm. It carries out the reaction carbamoyl phosphate + L-ornithine = L-citrulline + phosphate + H(+). Its pathway is amino-acid biosynthesis; L-arginine biosynthesis; L-arginine from L-ornithine and carbamoyl phosphate: step 1/3. Its function is as follows. Reversibly catalyzes the transfer of the carbamoyl group from carbamoyl phosphate (CP) to the N(epsilon) atom of ornithine (ORN) to produce L-citrulline. This Rhodococcus jostii (strain RHA1) protein is Ornithine carbamoyltransferase.